We begin with the raw amino-acid sequence, 100 residues long: NAD(P)H-quinone oxidoreductase subunit 4L, chloroplastic (100 aa).

3 helical membrane-spanning segments follow: residues 1 to 21 (MFGH…YGLI), 29 to 49 (ALMC…TFPN), and 63 to 83 (VFVI…VLAI).

The protein belongs to the complex I subunit 4L family. In terms of assembly, NDH is composed of at least 16 different subunits, 5 of which are encoded in the nucleus.

It is found in the plastid. Its subcellular location is the chloroplast thylakoid membrane. It catalyses the reaction a plastoquinone + NADH + (n+1) H(+)(in) = a plastoquinol + NAD(+) + n H(+)(out). The enzyme catalyses a plastoquinone + NADPH + (n+1) H(+)(in) = a plastoquinol + NADP(+) + n H(+)(out). Functionally, NDH shuttles electrons from NAD(P)H:plastoquinone, via FMN and iron-sulfur (Fe-S) centers, to quinones in the photosynthetic chain and possibly in a chloroplast respiratory chain. The immediate electron acceptor for the enzyme in this species is believed to be plastoquinone. Couples the redox reaction to proton translocation, and thus conserves the redox energy in a proton gradient. The sequence is that of NAD(P)H-quinone oxidoreductase subunit 4L, chloroplastic from Huperzia lucidula (Shining clubmoss).